The chain runs to 717 residues: Polyribonucleotide nucleotidyltransferase (717 aa).

Residues D496 and D502 each coordinate Mg(2+). In terms of domain architecture, KH spans 563 to 622 (PRLLSFKIDPEMIGLVIGPGGKTIKGITEETGVKIDIDDDGTVTIAAADGEKAKQACNII). Residues 632–700 (GDVYVGRVTR…SKGRVNLTRL (69 aa)) enclose the S1 motif domain.

Belongs to the polyribonucleotide nucleotidyltransferase family. It depends on Mg(2+) as a cofactor.

The protein resides in the cytoplasm. It carries out the reaction RNA(n+1) + phosphate = RNA(n) + a ribonucleoside 5'-diphosphate. Involved in mRNA degradation. Catalyzes the phosphorolysis of single-stranded polyribonucleotides processively in the 3'- to 5'-direction. The chain is Polyribonucleotide nucleotidyltransferase from Trichodesmium erythraeum (strain IMS101).